The sequence spans 341 residues: L-threonine 3-dehydrogenase (341 aa).

Zn(2+) is bound at residue C38. Catalysis depends on charge relay system residues T40 and H43. Residues H63, E64, C93, C96, C99, and C107 each contribute to the Zn(2+) site. Residues I175, D195, R200, 262 to 264 (LGI), and 286 to 287 (IY) contribute to the NAD(+) site.

Belongs to the zinc-containing alcohol dehydrogenase family. In terms of assembly, homotetramer. Requires Zn(2+) as cofactor.

The protein localises to the cytoplasm. The enzyme catalyses L-threonine + NAD(+) = (2S)-2-amino-3-oxobutanoate + NADH + H(+). Its pathway is amino-acid degradation; L-threonine degradation via oxydo-reductase pathway; glycine from L-threonine: step 1/2. Functionally, catalyzes the NAD(+)-dependent oxidation of L-threonine to 2-amino-3-ketobutyrate. This chain is L-threonine 3-dehydrogenase, found in Shewanella sp. (strain ANA-3).